A 65-amino-acid polypeptide reads, in one-letter code: UPF0434 protein VFMJ11_A0475 (65 aa).

This sequence belongs to the UPF0434 family.

This Aliivibrio fischeri (strain MJ11) (Vibrio fischeri) protein is UPF0434 protein VFMJ11_A0475.